Here is a 151-residue protein sequence, read N- to C-terminus: Chaperonin GroEL (151 aa).

Residue 41 to 45 participates in ATP binding; the sequence is DGTTT.

This sequence belongs to the chaperonin (HSP60) family. Forms a cylinder of 14 subunits composed of two heptameric rings stacked back-to-back. Interacts with the co-chaperonin GroES.

It is found in the cytoplasm. It catalyses the reaction ATP + H2O + a folded polypeptide = ADP + phosphate + an unfolded polypeptide.. Functionally, together with its co-chaperonin GroES, plays an essential role in assisting protein folding. The GroEL-GroES system forms a nano-cage that allows encapsulation of the non-native substrate proteins and provides a physical environment optimized to promote and accelerate protein folding. This Mycolicibacterium fortuitum (Mycobacterium fortuitum) protein is Chaperonin GroEL.